The sequence spans 77 residues: Acyl carrier protein (77 aa).

Residues 1 to 76 (MENFDKVKDI…DAVKFINSIE (76 aa)) form the Carrier domain. O-(pantetheine 4'-phosphoryl)serine is present on Ser36.

It belongs to the acyl carrier protein (ACP) family. Post-translationally, 4'-phosphopantetheine is transferred from CoA to a specific serine of apo-ACP by AcpS. This modification is essential for activity because fatty acids are bound in thioester linkage to the sulfhydryl of the prosthetic group.

The protein localises to the cytoplasm. It functions in the pathway lipid metabolism; fatty acid biosynthesis. In terms of biological role, carrier of the growing fatty acid chain in fatty acid biosynthesis. In Staphylococcus saprophyticus subsp. saprophyticus (strain ATCC 15305 / DSM 20229 / NCIMB 8711 / NCTC 7292 / S-41), this protein is Acyl carrier protein.